The chain runs to 690 residues: Eukaryotic translation initiation factor 3 subunit B (690 aa).

The span at 1-11 (MAKKKSEEHSG) shows a compositional bias: basic and acidic residues. The disordered stretch occupies residues 1–33 (MAKKKSEEHSGADANDSDYNEEPNFDDPPGYVD). The segment covering 15–25 (NDSDYNEEPNF) has biased composition (acidic residues). An RRM domain is found at 57–141 (SVVVVDNMPK…YTFAVNLFTD (85 aa)). WD repeat units lie at residues 207-246 (TRER…KIQK), 292-331 (GDGM…LLDL), 334-369 (IKIA…TLME), 442-484 (EIRE…KPSL), and 530-575 (PDHF…IRRT). Residues 613–646 (EQKDRLRLTRASKELLEKRAQLRETFMEYRNKRI) adopt a coiled-coil conformation.

The protein belongs to the eIF-3 subunit B family. Component of the eukaryotic translation initiation factor 3 (eIF-3) complex. The eIF-3 complex interacts with pix. Interacts with mxt.

The protein resides in the cytoplasm. Its function is as follows. RNA-binding component of the eukaryotic translation initiation factor 3 (eIF-3) complex, which is involved in protein synthesis of a specialized repertoire of mRNAs and, together with other initiation factors, stimulates binding of mRNA and methionyl-tRNAi to the 40S ribosome. The eIF-3 complex specifically targets and initiates translation of a subset of mRNAs involved in cell proliferation. This Drosophila mojavensis (Fruit fly) protein is Eukaryotic translation initiation factor 3 subunit B.